A 183-amino-acid chain; its full sequence is Lipocalin (183 aa).

A signal peptide spans 1–20 (MKGLVLSFALVALSALCVYG). A disulfide bond links Cys83 and Cys179.

Belongs to the calycin superfamily. Lipocalin family. As to quaternary structure, monomer. In terms of tissue distribution, expressed mainly in choroid plexus. Much lower expression in other brain areas, and absent from liver.

The protein resides in the secreted. In terms of biological role, might have a transport function across the blood brain barrier. Is supposed to have similar functions as a transthyretin which must have evolved after the stage of the amphibians in evolution. This is Lipocalin from Rhinella marina (Cane toad).